The chain runs to 317 residues: tRNA dimethylallyltransferase (317 aa).

19-26 (GPTASGKS) serves as a coordination point for ATP. 21–26 (TASGKS) contributes to the substrate binding site. The segment at 44–47 (DSMQ) is interaction with substrate tRNA.

Belongs to the IPP transferase family. Monomer. Mg(2+) is required as a cofactor.

It carries out the reaction adenosine(37) in tRNA + dimethylallyl diphosphate = N(6)-dimethylallyladenosine(37) in tRNA + diphosphate. Catalyzes the transfer of a dimethylallyl group onto the adenine at position 37 in tRNAs that read codons beginning with uridine, leading to the formation of N6-(dimethylallyl)adenosine (i(6)A). The polypeptide is tRNA dimethylallyltransferase (Methylorubrum populi (strain ATCC BAA-705 / NCIMB 13946 / BJ001) (Methylobacterium populi)).